The chain runs to 335 residues: Adenosine deaminase (335 aa).

The Zn(2+) site is built by His-12 and His-14. Substrate is bound by residues His-14 and Asp-16. A Zn(2+)-binding site is contributed by His-197. Residue Glu-200 is the Proton donor of the active site. Asp-278 is a Zn(2+) binding site.

Belongs to the metallo-dependent hydrolases superfamily. Adenosine and AMP deaminases family. Adenosine deaminase subfamily. Requires Zn(2+) as cofactor.

It catalyses the reaction adenosine + H2O + H(+) = inosine + NH4(+). The catalysed reaction is 2'-deoxyadenosine + H2O + H(+) = 2'-deoxyinosine + NH4(+). Its function is as follows. Catalyzes the hydrolytic deamination of adenosine and 2-deoxyadenosine. The protein is Adenosine deaminase of Clostridium botulinum (strain Kyoto / Type A2).